Here is a 408-residue protein sequence, read N- to C-terminus: Phosphoglycerate kinase (408 aa).

Residues 28–30 (DIN), Arg43, 66–69 (HQGR), Arg123, and Arg163 each bind substrate. Residues Glu334 and 358-361 (GGHT) contribute to the ATP site.

The protein belongs to the phosphoglycerate kinase family. As to quaternary structure, monomer.

The protein resides in the cytoplasm. The catalysed reaction is (2R)-3-phosphoglycerate + ATP = (2R)-3-phospho-glyceroyl phosphate + ADP. Its pathway is carbohydrate degradation; glycolysis; pyruvate from D-glyceraldehyde 3-phosphate: step 2/5. In Pyrobaculum aerophilum (strain ATCC 51768 / DSM 7523 / JCM 9630 / CIP 104966 / NBRC 100827 / IM2), this protein is Phosphoglycerate kinase.